Reading from the N-terminus, the 436-residue chain is uncharacterized protein (436 aa).

This is an uncharacterized protein from Haemophilus influenzae (strain ATCC 51907 / DSM 11121 / KW20 / Rd).